The primary structure comprises 430 residues: ATP-dependent protease ATPase subunit HslU (430 aa).

ATP-binding positions include V18, G60 to E65, D243, E308, and R380.

The protein belongs to the ClpX chaperone family. HslU subfamily. A double ring-shaped homohexamer of HslV is capped on each side by a ring-shaped HslU homohexamer. The assembly of the HslU/HslV complex is dependent on binding of ATP.

It is found in the cytoplasm. Functionally, ATPase subunit of a proteasome-like degradation complex; this subunit has chaperone activity. The binding of ATP and its subsequent hydrolysis by HslU are essential for unfolding of protein substrates subsequently hydrolyzed by HslV. HslU recognizes the N-terminal part of its protein substrates and unfolds these before they are guided to HslV for hydrolysis. This chain is ATP-dependent protease ATPase subunit HslU, found in Caulobacter vibrioides (strain ATCC 19089 / CIP 103742 / CB 15) (Caulobacter crescentus).